A 251-amino-acid chain; its full sequence is uncharacterized protein (251 aa).

The signal sequence occupies residues 1–18 (MKILIILSIILCSLFGRA).

Belongs to the MlaA family.

This is an uncharacterized protein from Rickettsia prowazekii (strain Madrid E).